A 123-amino-acid polypeptide reads, in one-letter code: Kininogen (123 aa).

Bradykinin is released from kininogen by kallikrein. In terms of processing, N-glycosylated. Contains sulfated N-acetylglucosamine and O-acetylated sialic acids as terminal elements on biantennary and triantennary N-glycans.

In terms of biological role, inhibits papain and ficin (cysteine proteinases) but not trypsin (a serine proteinase). The chain is Kininogen from Gadus morhua (Atlantic cod).